Here is a 367-residue protein sequence, read N- to C-terminus: Alginate lyase (367 aa).

Positions 1–24 (MTAFKRIFSPALLVLALYGGAAHA) are cleaved as a signal peptide. Substrate is bound by residues 63-64 (SK), 136-137 (HT), and Tyr-254.

This sequence belongs to the polysaccharide lyase 5 family.

The protein resides in the periplasm. The enzyme catalyses Eliminative cleavage of alginate to give oligosaccharides with 4-deoxy-alpha-L-erythro-hex-4-enuronosyl groups at their non-reducing ends and beta-D-mannuronate at their reducing end.. Its function is as follows. Catalyzes the depolymerization of alginate by cleaving the beta-1,4 glycosidic bond between two adjacent sugar residues via a beta-elimination mechanism. May serve to degrade mislocalized alginate that is trapped in the periplasmic space. The chain is Alginate lyase from Pseudomonas putida (strain W619).